The primary structure comprises 188 residues: NAD(P)H-quinone oxidoreductase subunit 6, chloroplastic (188 aa).

5 helical membrane passes run 10–30 (GILLIIELGILLGSMGVILLN), 32–52 (IVQSAFSLGLTFISISLLYLV), 61–81 (AQVLIYVGAINVLIVFSVMLI), 97–117 (GNNITLIVCTSLFLFLVSIIL), and 153–173 (FLLPFELLSVLLLVALVGAIT).

Belongs to the complex I subunit 6 family. In terms of assembly, NDH is composed of at least 16 different subunits, 5 of which are encoded in the nucleus.

The protein localises to the plastid. The protein resides in the chloroplast thylakoid membrane. It carries out the reaction a plastoquinone + NADH + (n+1) H(+)(in) = a plastoquinol + NAD(+) + n H(+)(out). The catalysed reaction is a plastoquinone + NADPH + (n+1) H(+)(in) = a plastoquinol + NADP(+) + n H(+)(out). NDH shuttles electrons from NAD(P)H:plastoquinone, via FMN and iron-sulfur (Fe-S) centers, to quinones in the photosynthetic chain and possibly in a chloroplast respiratory chain. The immediate electron acceptor for the enzyme in this species is believed to be plastoquinone. Couples the redox reaction to proton translocation, and thus conserves the redox energy in a proton gradient. The protein is NAD(P)H-quinone oxidoreductase subunit 6, chloroplastic (ndhG) of Psilotum nudum (Whisk fern).